The primary structure comprises 616 residues: Chaperone protein HscA homolog (616 aa).

The protein belongs to the heat shock protein 70 family.

Functionally, chaperone involved in the maturation of iron-sulfur cluster-containing proteins. Has a low intrinsic ATPase activity which is markedly stimulated by HscB. The chain is Chaperone protein HscA homolog from Vibrio cholerae serotype O1 (strain M66-2).